Reading from the N-terminus, the 696-residue chain is MVHTVQAECCGKTITIETGKIAKQASGAVMIKSGDTMVLVTAVAMKSAKEGQGFFPLTVNYQEKAYAGGRIPGSFFKREGRPSDNETLTCRLIDRPIRPLFPENFLNDTQIMATVVSADKDNDPGILSMIGASAALMVSDVPFAGPIAGVKVGRVDGQFIANPTAEQEEKSDLEIVIAASQDAILMVEGSACEVSEDDLLEAIFFGHKAVQPVLAAQLELAKKVGTSKREIPAPVVNEALKARVSALAKEGMKQAVRIKTKVERHLAIDAIADETVAALSAEFEGSEKEIKGFIEDLEYDLVREHIIKDGQRIDGRDTKTIRAISTEVSLLPRAHGSALFTRGETQSIVAATLGTSVDEQRIDSLYGDSRKKFMLHYNFPPYSVGETSFRLAPGRREIGHGMLAERALQQVLPKHDDFPYTIRIVSDITESNGSSSMATVCGGSLSMMDAGIPIKAPVAGIAMGLIKEGDDFAILSDILGDEDHLGDMDFKVAGTAEGVTALQMDIKIGGVTREIMSAALAQAKAGRIHILGEMAKTIGASRGDLSAFAPRITTIWVKVDKIRDVIGSGGKNIRSVTEATGVSIDIDDTGKINIASTNKEACDLAIKMIRNLTAEAEEGKLYMGTVKKIMEFGAFVEIFPGTDGLVHVSELDTERVKNVSDILKEGDKVLVKCIGIDKQGKIKLSRKEALGLTFTE.

The Mg(2+) site is built by aspartate 483 and aspartate 489. The 60-residue stretch at 550–609 folds into the KH domain; that stretch reads PRITTIWVKVDKIRDVIGSGGKNIRSVTEATGVSIDIDDTGKINIASTNKEACDLAIKMI. Positions 619-687 constitute an S1 motif domain; sequence GKLYMGTVKK…KQGKIKLSRK (69 aa).

This sequence belongs to the polyribonucleotide nucleotidyltransferase family. It depends on Mg(2+) as a cofactor.

Its subcellular location is the cytoplasm. It catalyses the reaction RNA(n+1) + phosphate = RNA(n) + a ribonucleoside 5'-diphosphate. Functionally, involved in mRNA degradation. Catalyzes the phosphorolysis of single-stranded polyribonucleotides processively in the 3'- to 5'-direction. This chain is Polyribonucleotide nucleotidyltransferase, found in Citrifermentans bemidjiense (strain ATCC BAA-1014 / DSM 16622 / JCM 12645 / Bem) (Geobacter bemidjiensis).